Here is a 274-residue protein sequence, read N- to C-terminus: 4-hydroxy-3-methylbut-2-enyl diphosphate reductase (274 aa).

Cys-12 lines the [4Fe-4S] cluster pocket. Residues His-36 and His-70 each contribute to the (2E)-4-hydroxy-3-methylbut-2-enyl diphosphate site. His-36 and His-70 together coordinate dimethylallyl diphosphate. 2 residues coordinate isopentenyl diphosphate: His-36 and His-70. Position 92 (Cys-92) interacts with [4Fe-4S] cluster. A (2E)-4-hydroxy-3-methylbut-2-enyl diphosphate-binding site is contributed by His-120. Residue His-120 coordinates dimethylallyl diphosphate. Isopentenyl diphosphate is bound at residue His-120. Glu-122 acts as the Proton donor in catalysis. A (2E)-4-hydroxy-3-methylbut-2-enyl diphosphate-binding site is contributed by Thr-158. Cys-186 contributes to the [4Fe-4S] cluster binding site. Positions 214, 215, 216, and 258 each coordinate (2E)-4-hydroxy-3-methylbut-2-enyl diphosphate. The dimethylallyl diphosphate site is built by Ser-214, Ser-215, Asn-216, and Ser-258. The isopentenyl diphosphate site is built by Ser-214, Ser-215, Asn-216, and Ser-258.

Belongs to the IspH family. [4Fe-4S] cluster is required as a cofactor.

The enzyme catalyses isopentenyl diphosphate + 2 oxidized [2Fe-2S]-[ferredoxin] + H2O = (2E)-4-hydroxy-3-methylbut-2-enyl diphosphate + 2 reduced [2Fe-2S]-[ferredoxin] + 2 H(+). The catalysed reaction is dimethylallyl diphosphate + 2 oxidized [2Fe-2S]-[ferredoxin] + H2O = (2E)-4-hydroxy-3-methylbut-2-enyl diphosphate + 2 reduced [2Fe-2S]-[ferredoxin] + 2 H(+). It functions in the pathway isoprenoid biosynthesis; dimethylallyl diphosphate biosynthesis; dimethylallyl diphosphate from (2E)-4-hydroxy-3-methylbutenyl diphosphate: step 1/1. The protein operates within isoprenoid biosynthesis; isopentenyl diphosphate biosynthesis via DXP pathway; isopentenyl diphosphate from 1-deoxy-D-xylulose 5-phosphate: step 6/6. Its function is as follows. Catalyzes the conversion of 1-hydroxy-2-methyl-2-(E)-butenyl 4-diphosphate (HMBPP) into a mixture of isopentenyl diphosphate (IPP) and dimethylallyl diphosphate (DMAPP). Acts in the terminal step of the DOXP/MEP pathway for isoprenoid precursor biosynthesis. This is 4-hydroxy-3-methylbut-2-enyl diphosphate reductase from Helicobacter pylori (strain Shi470).